The primary structure comprises 196 residues: DnaA initiator-associating protein DiaA (196 aa).

One can recognise an SIS domain in the interval 34 to 196; it reads VVQSLLNGNK…DNTLFPHQEV (163 aa).

Belongs to the SIS family. DiaA subfamily. Homotetramer; dimer of dimers.

In terms of biological role, required for the timely initiation of chromosomal replication via direct interactions with the DnaA initiator protein. This chain is DnaA initiator-associating protein DiaA, found in Erwinia tasmaniensis (strain DSM 17950 / CFBP 7177 / CIP 109463 / NCPPB 4357 / Et1/99).